Here is a 42-residue protein sequence, read N- to C-terminus: Protein MGF 360-20R (42 aa).

Belongs to the asfivirus MGF 360 family.

Plays a role in virus cell tropism, and may be required for efficient virus replication in macrophages. The sequence is that of Protein MGF 360-20R from African swine fever virus (strain Badajoz 1971 Vero-adapted) (Ba71V).